Consider the following 123-residue polypeptide: Large ribosomal subunit protein uL18 (123 aa).

The protein belongs to the universal ribosomal protein uL18 family. In terms of assembly, part of the 50S ribosomal subunit; part of the 5S rRNA/L5/L18/L25 subcomplex. Contacts the 5S and 23S rRNAs.

Its function is as follows. This is one of the proteins that bind and probably mediate the attachment of the 5S RNA into the large ribosomal subunit, where it forms part of the central protuberance. The sequence is that of Large ribosomal subunit protein uL18 from Symbiobacterium thermophilum (strain DSM 24528 / JCM 14929 / IAM 14863 / T).